Reading from the N-terminus, the 218-residue chain is MGQKINPLGFRLGTTQSHHSLWFSQPKNYSEGLQEDKKIRDCIKNYVQKNMRTSSGIEGIARIEIQKRIDLIQVIIFMGFPKLLIESRPRGIEELQMTLQKEFNCVNRKLNIAVTRIAKPYGNPNILAEFIAGQLKNRVSFRKAMKKAIELTEQADTKGIQIQIAGRIDGKEIARVEWIREGRVPLQTIRAKIDYCSYTVRTIYGILGIKIWIFLDEE.

In terms of domain architecture, KH type-2 spans 47 to 118 (VQKNMRTSSG…KLNIAVTRIA (72 aa)).

The protein belongs to the universal ribosomal protein uS3 family. In terms of assembly, part of the 30S ribosomal subunit.

Its subcellular location is the plastid. It is found in the chloroplast. The chain is Small ribosomal subunit protein uS3c (rps3) from Solanum lycopersicum (Tomato).